We begin with the raw amino-acid sequence, 629 residues long: MVLSCRVVDCGGLKLKENQTLLLLVSTIHNSSEVGKLSIDAEEKRSKEWLEMPCAEGMLSLKLTLWQDLLKGINSVFHGQVRVDVDENWKSGPAKWFYLRSKANEDGEGGEDGGDIGDATVKVTYQIDHILRMQVYKPLLDLLFLAGDVQPLTASLVAVIEALPKVELGPVSRSLVELMAQSDRIRPVLSSLYVNSILKCQDENTLFRGQSLSGKMLFEILTTYGKMYLITTLKPVVDKIYKERKNCEVDPARVAVGASLEKNRNNLLVYFQMLFERVTTSSTNCPHLIKQLLYDLRNVVGTHSSRSGVQRLAVSSFVIMRFFAAAILNPKAFEIRKDQPDLRVSRTLLLLSKLLQRLSNCSVSEGPLSSKEIWLNGVFETVTSEQHKSVMASFLDNISLVGDRSEPQKCTVFKFGNLQQVDRSRLAWKKVLHYKKRYVQLTNTHLIWQKDVQCAPKGTVPLSDIKFVNVDNKNIITIVCETMQLQFEAPGGVEATDWLNAIERQRNRAAHEIAETPGEHFFVDAERHVDKIHTLLYKYRETMIEWRDQLQSNVELDEKTAPELLKASYVVEEERQSHKDSLIATLCSTIDVTDAIQLAHTEYEKENKVSRRIDAIITAKKRQKSFSVK.

A Ras-GAP domain is found at 183–398 (DRIRPVLSSL…SVMASFLDNI (216 aa)). Positions 411 to 507 (TVFKFGNLQQ…WLNAIERQRN (97 aa)) constitute a PH domain.

Its subcellular location is the cytoplasm. Functionally, GTPase-activating protein, which inhibits the vulval induction by acting as a negative regulator for the member of the Ras family let-60. Probably decreases the signaling activity of Ras by stimulating its intrinsic GTPase activity, thereby lowering the levels of GTP-bound, active Ras. This chain is Ras GTPase-activating protein gap-1 (gap-1), found in Caenorhabditis elegans.